We begin with the raw amino-acid sequence, 214 residues long: Adenylate kinase (214 aa).

10-15 (GAGKGT) contributes to the ATP binding site. Residues 30–59 (STGDMLRAAIKAGTELGLNAKAVMDAGQLV) are NMP. Residues threonine 31, arginine 36, 57–59 (QLV), 85–88 (GFPR), and glutamine 92 contribute to the AMP site. The segment at 122–159 (GRRVHSGSGRTYHVVFNPPKVEGKDDVTGEDLVIRADD) is LID. ATP contacts are provided by residues arginine 123 and 132–133 (TY). Residues arginine 156 and arginine 167 each contribute to the AMP site. Glutamine 200 provides a ligand contact to ATP.

The protein belongs to the adenylate kinase family. Monomer.

The protein localises to the cytoplasm. The enzyme catalyses AMP + ATP = 2 ADP. It functions in the pathway purine metabolism; AMP biosynthesis via salvage pathway; AMP from ADP: step 1/1. Its function is as follows. Catalyzes the reversible transfer of the terminal phosphate group between ATP and AMP. Plays an important role in cellular energy homeostasis and in adenine nucleotide metabolism. The chain is Adenylate kinase from Aeromonas salmonicida (strain A449).